Consider the following 383-residue polypeptide: Probable acyl-CoA dehydrogenase YdiO (383 aa).

The protein belongs to the acyl-CoA dehydrogenase family. Requires FAD as cofactor.

The enzyme catalyses a 2,3-saturated acyl-CoA + A = a 2,3-dehydroacyl-CoA + AH2. This is Probable acyl-CoA dehydrogenase YdiO (ydiO) from Escherichia coli O157:H7.